Here is a 316-residue protein sequence, read N- to C-terminus: Retinol dehydrogenase 12 (316 aa).

Position 46–52 (Gly-46–Gly-52) interacts with NADP(+). Substrate is bound at residue Ser-175. The Proton acceptor role is filled by Tyr-200.

Belongs to the short-chain dehydrogenases/reductases (SDR) family. As to expression, expressed in the retina.

The enzyme catalyses all-trans-retinol + NADP(+) = all-trans-retinal + NADPH + H(+). It carries out the reaction 11-cis-retinol + NADP(+) = 11-cis-retinal + NADPH + H(+). The catalysed reaction is 9-cis-retinol + NADP(+) = 9-cis-retinal + NADPH + H(+). It catalyses the reaction a 4-hydroxynonen-1-ol + NADP(+) = a 4-hydroxynonenal + NADPH + H(+). The enzyme catalyses (E)-non-2-en-1-ol + NADP(+) = (E)-non-2-enal + NADPH + H(+). It carries out the reaction (Z)-non-6-en-1-ol + NADP(+) = (Z)-non-6-enal + NADPH + H(+). The catalysed reaction is nonan-1-ol + NADP(+) = nonanal + NADPH + H(+). It functions in the pathway cofactor metabolism; retinol metabolism. Functionally, retinoids dehydrogenase/reductase with a clear preference for NADP. Displays high activity towards 9-cis, 11-cis and all-trans-retinal. Shows very weak activity towards 13-cis-retinol. Also exhibits activity, albeit with lower affinity than for retinaldehydes, towards lipid peroxidation products (C9 aldehydes) such as 4-hydroxynonenal and trans-2-nonenal. May play an important function in photoreceptor cells to detoxify 4-hydroxynonenal and potentially other toxic aldehyde products resulting from lipid peroxidation. Has no dehydrogenase activity towards steroids. The sequence is that of Retinol dehydrogenase 12 (RDH12) from Bos taurus (Bovine).